The chain runs to 117 residues: Large ribosomal subunit protein uL18 (117 aa).

It belongs to the universal ribosomal protein uL18 family. As to quaternary structure, part of the 50S ribosomal subunit; part of the 5S rRNA/L5/L18/L25 subcomplex. Contacts the 5S and 23S rRNAs.

This is one of the proteins that bind and probably mediate the attachment of the 5S RNA into the large ribosomal subunit, where it forms part of the central protuberance. This is Large ribosomal subunit protein uL18 from Aeromonas salmonicida (strain A449).